A 158-amino-acid chain; its full sequence is Salt stress-responsive protein YocM (158 aa).

Residues 51–158 (GKGDASFPSM…GQAKTIVIDD (108 aa)) form the sHSP domain.

It belongs to the small heat shock protein (HSP20) family. In terms of assembly, forms homodimers, homotetramers and higher oligomers.

It localises to the cytoplasm. Part of the cellular protein quality control system with a specific role in salt stress response. May facilitate protein homeostasis, together with chemical chaperones that accumulate during the salt stress response. Increased levels of YocM protects against both heat and salt stress. In vitro, displays an unusual aggregase chaperone activity. This Bacillus subtilis (strain 168) protein is Salt stress-responsive protein YocM (yocM).